A 272-amino-acid chain; its full sequence is Large ribosomal subunit protein uL4 (272 aa).

The protein belongs to the universal ribosomal protein uL4 family. As to quaternary structure, part of the 50S ribosomal subunit.

One of the primary rRNA binding proteins, this protein initially binds near the 5'-end of the 23S rRNA. It is important during the early stages of 50S assembly. It makes multiple contacts with different domains of the 23S rRNA in the assembled 50S subunit and ribosome. In terms of biological role, forms part of the polypeptide exit tunnel. This is Large ribosomal subunit protein uL4 from Aeropyrum pernix (strain ATCC 700893 / DSM 11879 / JCM 9820 / NBRC 100138 / K1).